A 168-amino-acid polypeptide reads, in one-letter code: MAGSVNKVILVGNLGADPEIRRLNSGDMVANLRIATSESWRDRQTGERKDRTEWHSVVIFNENLAKVAEQYLKKGAKVYIEGALQTRKWQDQNGNDRYSTEIVLQKFRGELQMLDSRSEGGEGRSFGGGGNRNQMSDYSGGGGDFGSSGPSSGSSGGFSRDLDDEIPF.

The region spanning 5–111 is the SSB domain; sequence VNKVILVGNL…IVLQKFRGEL (107 aa). Residues 54–60 mediate DNA binding; it reads WHSVVIF. Residues 113–168 form a disordered region; that stretch reads MLDSRSEGGEGRSFGGGGNRNQMSDYSGGGGDFGSSGPSSGSSGGFSRDLDDEIPF. A compositionally biased stretch (low complexity) spans 147 to 159; sequence SSGPSSGSSGGFS. Positions 163–168 match the Important for interaction with partner proteins motif; the sequence is DDEIPF.

As to quaternary structure, homotetramer.

Functionally, plays an important role in DNA replication, recombination and repair. Binds to ssDNA and to an array of partner proteins to recruit them to their sites of action during DNA metabolism. The chain is Single-stranded DNA-binding protein (ssb) from Brucella suis biovar 1 (strain 1330).